A 104-amino-acid chain; its full sequence is Co-chaperonin GroES 1 (104 aa).

Belongs to the GroES chaperonin family. In terms of assembly, heptamer of 7 subunits arranged in a ring. Interacts with the chaperonin GroEL.

It is found in the cytoplasm. Together with the chaperonin GroEL, plays an essential role in assisting protein folding. The GroEL-GroES system forms a nano-cage that allows encapsulation of the non-native substrate proteins and provides a physical environment optimized to promote and accelerate protein folding. GroES binds to the apical surface of the GroEL ring, thereby capping the opening of the GroEL channel. This chain is Co-chaperonin GroES 1, found in Mesorhizobium japonicum (strain LMG 29417 / CECT 9101 / MAFF 303099) (Mesorhizobium loti (strain MAFF 303099)).